The chain runs to 180 residues: ATP synthase subunit delta (180 aa).

Belongs to the ATPase delta chain family. As to quaternary structure, F-type ATPases have 2 components, F(1) - the catalytic core - and F(0) - the membrane proton channel. F(1) has five subunits: alpha(3), beta(3), gamma(1), delta(1), epsilon(1). F(0) has three main subunits: a(1), b(2) and c(10-14). The alpha and beta chains form an alternating ring which encloses part of the gamma chain. F(1) is attached to F(0) by a central stalk formed by the gamma and epsilon chains, while a peripheral stalk is formed by the delta and b chains.

Its subcellular location is the cell membrane. In terms of biological role, f(1)F(0) ATP synthase produces ATP from ADP in the presence of a proton or sodium gradient. F-type ATPases consist of two structural domains, F(1) containing the extramembraneous catalytic core and F(0) containing the membrane proton channel, linked together by a central stalk and a peripheral stalk. During catalysis, ATP synthesis in the catalytic domain of F(1) is coupled via a rotary mechanism of the central stalk subunits to proton translocation. This protein is part of the stalk that links CF(0) to CF(1). It either transmits conformational changes from CF(0) to CF(1) or is implicated in proton conduction. This is ATP synthase subunit delta from Latilactobacillus sakei subsp. sakei (strain 23K) (Lactobacillus sakei subsp. sakei).